Consider the following 467-residue polypeptide: ATP-dependent protease ATPase subunit HslU (467 aa).

Residues valine 22 and 64–69 each bind ATP; that span reads GVGKTE. The segment at 149–192 is disordered; sequence QTNNPLESLFGGAIPNFGQNNEDEEEPPTEEIKTKRSEIKRQLE. Residues 178-192 show a composition bias toward basic and acidic residues; that stretch reads EEIKTKRSEIKRQLE. ATP is bound by residues aspartate 280, glutamate 345, and arginine 417.

The protein belongs to the ClpX chaperone family. HslU subfamily. As to quaternary structure, a double ring-shaped homohexamer of HslV is capped on each side by a ring-shaped HslU homohexamer. The assembly of the HslU/HslV complex is dependent on binding of ATP.

It localises to the cytoplasm. In terms of biological role, ATPase subunit of a proteasome-like degradation complex; this subunit has chaperone activity. The binding of ATP and its subsequent hydrolysis by HslU are essential for unfolding of protein substrates subsequently hydrolyzed by HslV. HslU recognizes the N-terminal part of its protein substrates and unfolds these before they are guided to HslV for hydrolysis. The sequence is that of ATP-dependent protease ATPase subunit HslU from Staphylococcus aureus (strain MW2).